We begin with the raw amino-acid sequence, 634 residues long: ABC transporter B family member 29, chloroplastic (634 aa).

The N-terminal 51 residues, 1 to 51 (MSFLLLTPPPCLLIPPPPLSHRRSSSLFLKHPFQPSPRPLSFCKPSALRLR), are a transit peptide targeting the chloroplast. Helical transmembrane passes span 75–95 (TVLLGWLCSCVSVVSLSQIVP), 119–139 (LVLAGLVLAKVVAYYLQQAFL), 195–215 (LLNTVVPSAIQISVMTAHMIV), 219–239 (ALTLVSAMVIPSVALLIAYLG), 307–327 (IVQVMYLGSLSIFCVGAVILA), and 330–350 (SLSSSAIVSFVASLAFLIDPV). An ABC transmembrane type-1 domain is found at 77–362 (LLGWLCSCVS…LGKAYNELKQ (286 aa)). Residues 396–633 (VELCDISFKY…KDSLTSAGLV (238 aa)) form the ABC transporter domain. 430 to 437 (GPSGGGKT) provides a ligand contact to ATP.

This sequence belongs to the ABC transporter superfamily. ABCB family. Multidrug resistance exporter (TC 3.A.1.201) subfamily.

Its subcellular location is the plastid. The protein resides in the chloroplast membrane. In Arabidopsis thaliana (Mouse-ear cress), this protein is ABC transporter B family member 29, chloroplastic (ABCB29).